The following is a 249-amino-acid chain: MKIEANDVHVYYGLDHTLKGVSLSVKKNTVTALIGPSGCGKSTFLRCMNRMNDLIDNCQVKGNILIDGVDINSPSVNTNELRKAVGMVFQKPNPFPKSIFENVAYGLRVNGVSNKEYINDKVEWSLKQAALWDEVKDKLKKSALALSGGQQQRLCIARALAVEPSILLMDEPASALDPISTSKIEELIYNLKASYTIMIVTHNMQQASRTSDKTAFFYMGELVEYDDTRTLFTNPKKKRTQNYITGRFG.

Positions 3-244 (IEANDVHVYY…PKKKRTQNYI (242 aa)) constitute an ABC transporter domain. Position 35–42 (35–42 (GPSGCGKS)) interacts with ATP.

This sequence belongs to the ABC transporter superfamily. Phosphate importer (TC 3.A.1.7) family. As to quaternary structure, the complex is composed of two ATP-binding proteins (PstB), two transmembrane proteins (PstC and PstA) and a solute-binding protein (PstS).

It localises to the cell inner membrane. The enzyme catalyses phosphate(out) + ATP + H2O = ADP + 2 phosphate(in) + H(+). Its function is as follows. Part of the ABC transporter complex PstSACB involved in phosphate import. Responsible for energy coupling to the transport system. This is Phosphate import ATP-binding protein PstB from Cytophaga hutchinsonii (strain ATCC 33406 / DSM 1761 / CIP 103989 / NBRC 15051 / NCIMB 9469 / D465).